The primary structure comprises 415 residues: Fructose-like permease IIC component (415 aa).

The Cytoplasmic portion of the chain corresponds to 1–46 (MAIKKRSATVVHGASGAAAAVKNPQASKSSFWGELPQHVMSGISRM). One can recognise a PTS EIIC type-2 domain in the interval 35 to 415 (LPQHVMSGIS…RKGKLLIESL (381 aa)). A helical membrane pass occupies residues 47 to 67 (VPTLIMGGVILAFSQLIAYSW). The Periplasmic portion of the chain corresponds to 68–101 (LKIPADIGIMDALNSGKFSGFDLSLLKFAWLSQS). A helical transmembrane segment spans residues 102 to 122 (FGGVLFGFAIPMFAAFVANSI). The Cytoplasmic portion of the chain corresponds to 123-126 (GGKL). Residues 127–147 (AFPAGFIGGLMSTQPTQLLNF) traverse the membrane as a helical segment. Over 148–157 (DPSTMQWATS) the chain is Periplasmic. A helical transmembrane segment spans residues 158 to 178 (SPVPSTFIGALIISIVAGYLV). The Cytoplasmic portion of the chain corresponds to 179-197 (KWMNQKIQLPDFLLAFKTT). A helical membrane pass occupies residues 198–218 (FLLPILSAIFVMLAMYYVITP). The Periplasmic portion of the chain corresponds to 219–237 (FGGWINGGIRTVLTAAGEK). The helical transmembrane segment at 238 to 258 (GALMYAMGIAAATAIDLGGPI) threads the bilayer. Over 259-276 (NKAAGFVAFSFTTDHVLP) the chain is Cytoplasmic. The chain crosses the membrane as a helical span at residues 277-297 (VTARSIAIVIPPIGLGLATII). The Periplasmic portion of the chain corresponds to 298–318 (DRRLTGKRLFNAQLYPQGKTA). Residues 319-339 (MFLAFMGISEGAIPFALESPI) traverse the membrane as a helical segment. Topologically, residues 340-341 (TA) are cytoplasmic. A helical transmembrane segment spans residues 342–362 (IPSYMVGAIVGSTAAVWLGAV). At 363-378 (QWFPESAIWAWPLVTN) the chain is on the periplasmic side. The helical transmembrane segment at 379-399 (LGVYMAGIALGAIITALMVVF) threads the bilayer. Residues 400–415 (LRLMMFRKGKLLIESL) lie on the Cytoplasmic side of the membrane.

The protein localises to the cell inner membrane. Functionally, the phosphoenolpyruvate-dependent sugar phosphotransferase system (PTS), a major carbohydrate active -transport system, catalyzes the phosphorylation of incoming sugar substrates concomitant with their translocation across the cell membrane. In Escherichia coli O6:H1 (strain CFT073 / ATCC 700928 / UPEC), this protein is Fructose-like permease IIC component (fryC).